A 213-amino-acid polypeptide reads, in one-letter code: Thiamine-phosphate synthase (213 aa).

4-amino-2-methyl-5-(diphosphooxymethyl)pyrimidine contacts are provided by residues 40 to 44 and Asn75; that span reads QFREK. Residues Asp76 and Asp95 each coordinate Mg(2+). Ser113 provides a ligand contact to 4-amino-2-methyl-5-(diphosphooxymethyl)pyrimidine. 2-[(2R,5Z)-2-carboxy-4-methylthiazol-5(2H)-ylidene]ethyl phosphate is bound at residue 139–141; the sequence is TPS. Residue Lys142 participates in 4-amino-2-methyl-5-(diphosphooxymethyl)pyrimidine binding. Residues Gly171 and 191 to 192 each bind 2-[(2R,5Z)-2-carboxy-4-methylthiazol-5(2H)-ylidene]ethyl phosphate; that span reads IS.

The protein belongs to the thiamine-phosphate synthase family. Mg(2+) serves as cofactor.

The enzyme catalyses 2-[(2R,5Z)-2-carboxy-4-methylthiazol-5(2H)-ylidene]ethyl phosphate + 4-amino-2-methyl-5-(diphosphooxymethyl)pyrimidine + 2 H(+) = thiamine phosphate + CO2 + diphosphate. It catalyses the reaction 2-(2-carboxy-4-methylthiazol-5-yl)ethyl phosphate + 4-amino-2-methyl-5-(diphosphooxymethyl)pyrimidine + 2 H(+) = thiamine phosphate + CO2 + diphosphate. The catalysed reaction is 4-methyl-5-(2-phosphooxyethyl)-thiazole + 4-amino-2-methyl-5-(diphosphooxymethyl)pyrimidine + H(+) = thiamine phosphate + diphosphate. Its pathway is cofactor biosynthesis; thiamine diphosphate biosynthesis; thiamine phosphate from 4-amino-2-methyl-5-diphosphomethylpyrimidine and 4-methyl-5-(2-phosphoethyl)-thiazole: step 1/1. Functionally, condenses 4-methyl-5-(beta-hydroxyethyl)thiazole monophosphate (THZ-P) and 2-methyl-4-amino-5-hydroxymethyl pyrimidine pyrophosphate (HMP-PP) to form thiamine monophosphate (TMP). This chain is Thiamine-phosphate synthase, found in Staphylococcus aureus (strain MRSA252).